A 354-amino-acid chain; its full sequence is 3-dehydroquinate synthase (354 aa).

NAD(+) is bound by residues 66–71, 100–104, 124–125, K137, and K146; these read DGERYK, GVVGD, and TT. Residues E179, H242, and H259 each contribute to the Zn(2+) site.

It belongs to the sugar phosphate cyclases superfamily. Dehydroquinate synthase family. Requires Co(2+) as cofactor. It depends on Zn(2+) as a cofactor. NAD(+) serves as cofactor.

The protein localises to the cytoplasm. The catalysed reaction is 7-phospho-2-dehydro-3-deoxy-D-arabino-heptonate = 3-dehydroquinate + phosphate. It functions in the pathway metabolic intermediate biosynthesis; chorismate biosynthesis; chorismate from D-erythrose 4-phosphate and phosphoenolpyruvate: step 2/7. Catalyzes the conversion of 3-deoxy-D-arabino-heptulosonate 7-phosphate (DAHP) to dehydroquinate (DHQ). This chain is 3-dehydroquinate synthase, found in Halorhodospira halophila (strain DSM 244 / SL1) (Ectothiorhodospira halophila (strain DSM 244 / SL1)).